We begin with the raw amino-acid sequence, 631 residues long: MSQTNSHAQAGGTAKPIGLLIAAVGVVYGDIGTSPLYTLKEVFQGGYGVEVTHDAILGVLSLIFWSLIWVVSFKYMAFVLRADNQGEGGIMALMALARRASAKHPKLQMMMVVFGLFGAALFYGDSMITPAVSVLSAMEGLELAFDGLDHWIVPMALVVLVGLFLIQRHGTARIGVLFGPVMVVWFLVLGALGVYGIMQSPEVLKAVNPAWGLNFFIIHPGIGVAILGAVVLALTGAEALYADMGHFGRKPISRAWFILVLPALLLNYFGQGALVLGNPETVRNPFYLLAPSWALLPLIGLSTMATIIASQAVISGAFSMTLQAIQLGYIPRMHIQHTSSDAQGQIYIGAVNWALMVGVIMLVIGFESSGALASAYGVAVTGTMLCTTILVSTVMLMLWKWPPLLAVPLLICLLLVDGLFFAANVPKIFQGGAFPVLAGAVLFILMTTWKRGKHLLAERIDEGGLPLPIFIGSIRVQPPHRVQGTAVFLTARSDAVPHALLHNMLHNQVLHEQVVLLTVVYEDTPRVPSAQRFEVESYGEGFYRVILHFGFIDEPDVPAALALCHLAELDFSPMRTTYFLSRETVIPSKMDGMARWREALFAFMLKNANGNLRFFKLPFNRVIELGTQVEM.

Helical transmembrane passes span 17 to 37 (IGLL…SPLY), 56 to 76 (ILGV…FKYM), 109 to 129 (MMMV…SMIT), 147 to 167 (GLDH…FLIQ), 174 to 194 (IGVL…ALGV), 215 to 235 (FFII…LALT), 256 to 276 (WFIL…ALVL), 288 to 308 (LLAP…ATII), 346 to 366 (IYIG…VIGF), 378 to 398 (VAVT…MLML), 403 to 423 (PLLA…FFAA), and 428 to 448 (IFQG…LMTT).

This sequence belongs to the HAK/KUP transporter (TC 2.A.72) family.

It is found in the cell inner membrane. The enzyme catalyses K(+)(in) + H(+)(in) = K(+)(out) + H(+)(out). Its function is as follows. Transport of potassium into the cell. Likely operates as a K(+):H(+) symporter. This is Probable potassium transport system protein Kup from Pseudomonas syringae pv. tomato (strain ATCC BAA-871 / DC3000).